Here is a 484-residue protein sequence, read N- to C-terminus: Glutamyl-tRNA(Gln) amidotransferase subunit A (484 aa).

Active-site charge relay system residues include Lys-76 and Ser-151. Ser-175 (acyl-ester intermediate) is an active-site residue.

The protein belongs to the amidase family. GatA subfamily. In terms of assembly, heterotrimer of A, B and C subunits.

The enzyme catalyses L-glutamyl-tRNA(Gln) + L-glutamine + ATP + H2O = L-glutaminyl-tRNA(Gln) + L-glutamate + ADP + phosphate + H(+). In terms of biological role, allows the formation of correctly charged Gln-tRNA(Gln) through the transamidation of misacylated Glu-tRNA(Gln) in organisms which lack glutaminyl-tRNA synthetase. The reaction takes place in the presence of glutamine and ATP through an activated gamma-phospho-Glu-tRNA(Gln). The polypeptide is Glutamyl-tRNA(Gln) amidotransferase subunit A (Hahella chejuensis (strain KCTC 2396)).